The following is a 525-amino-acid chain: Peptide chain release factor 3 (525 aa).

One can recognise a tr-type G domain in the interval 11 to 279 (ERRRTFAIIS…AFVDMAPAPE (269 aa)). GTP-binding positions include 20–27 (SHPDAGKT), 88–92 (DTPGH), and 142–145 (NKLD).

It belongs to the TRAFAC class translation factor GTPase superfamily. Classic translation factor GTPase family. PrfC subfamily.

The protein localises to the cytoplasm. Functionally, increases the formation of ribosomal termination complexes and stimulates activities of RF-1 and RF-2. It binds guanine nucleotides and has strong preference for UGA stop codons. It may interact directly with the ribosome. The stimulation of RF-1 and RF-2 is significantly reduced by GTP and GDP, but not by GMP. This is Peptide chain release factor 3 from Latilactobacillus sakei subsp. sakei (strain 23K) (Lactobacillus sakei subsp. sakei).